The primary structure comprises 703 residues: tRNA 5-methylaminomethyl-2-thiouridine biosynthesis bifunctional protein MnmC (703 aa).

Residues 1-281 (MTAKPQKSCQ…KPAALVAKDH (281 aa)) form a tRNA (mnm(5)s(2)U34)-methyltransferase region. An FAD-dependent cmnm(5)s(2)U34 oxidoreductase region spans residues 286 to 703 (VGGGLASANL…LRKLLKGKAL (418 aa)).

In the N-terminal section; belongs to the methyltransferase superfamily. tRNA (mnm(5)s(2)U34)-methyltransferase family. It in the C-terminal section; belongs to the DAO family. Requires FAD as cofactor.

It localises to the cytoplasm. It carries out the reaction 5-aminomethyl-2-thiouridine(34) in tRNA + S-adenosyl-L-methionine = 5-methylaminomethyl-2-thiouridine(34) in tRNA + S-adenosyl-L-homocysteine + H(+). Its function is as follows. Catalyzes the last two steps in the biosynthesis of 5-methylaminomethyl-2-thiouridine (mnm(5)s(2)U) at the wobble position (U34) in tRNA. Catalyzes the FAD-dependent demodification of cmnm(5)s(2)U34 to nm(5)s(2)U34, followed by the transfer of a methyl group from S-adenosyl-L-methionine to nm(5)s(2)U34, to form mnm(5)s(2)U34. The protein is tRNA 5-methylaminomethyl-2-thiouridine biosynthesis bifunctional protein MnmC of Shewanella sp. (strain MR-7).